The following is a 297-amino-acid chain: tRNA pseudouridine synthase B (297 aa).

D41 serves as the catalytic Nucleophile.

This sequence belongs to the pseudouridine synthase TruB family. Type 1 subfamily.

The catalysed reaction is uridine(55) in tRNA = pseudouridine(55) in tRNA. Its function is as follows. Responsible for synthesis of pseudouridine from uracil-55 in the psi GC loop of transfer RNAs. The protein is tRNA pseudouridine synthase B of Synechococcus sp. (strain CC9311).